A 352-amino-acid chain; its full sequence is Biotin synthase (352 aa).

Residues 44-262 form the Radical SAM core domain; sequence NRVQVSTLLS…LAVARILMPK (219 aa). Positions 59, 63, and 66 each coordinate [4Fe-4S] cluster. 4 residues coordinate [2Fe-2S] cluster: C103, C134, C194, and R266.

Belongs to the radical SAM superfamily. Biotin synthase family. Homodimer. [4Fe-4S] cluster serves as cofactor. It depends on [2Fe-2S] cluster as a cofactor.

It carries out the reaction (4R,5S)-dethiobiotin + (sulfur carrier)-SH + 2 reduced [2Fe-2S]-[ferredoxin] + 2 S-adenosyl-L-methionine = (sulfur carrier)-H + biotin + 2 5'-deoxyadenosine + 2 L-methionine + 2 oxidized [2Fe-2S]-[ferredoxin]. It functions in the pathway cofactor biosynthesis; biotin biosynthesis; biotin from 7,8-diaminononanoate: step 2/2. Functionally, catalyzes the conversion of dethiobiotin (DTB) to biotin by the insertion of a sulfur atom into dethiobiotin via a radical-based mechanism. The chain is Biotin synthase from Pseudomonas putida (strain GB-1).